The chain runs to 166 residues: 3-hydroxyacyl-[acyl-carrier-protein] dehydratase FabZ (166 aa).

The active site involves histidine 72.

It belongs to the thioester dehydratase family. FabZ subfamily.

Its subcellular location is the cytoplasm. The catalysed reaction is a (3R)-hydroxyacyl-[ACP] = a (2E)-enoyl-[ACP] + H2O. Its function is as follows. Involved in unsaturated fatty acids biosynthesis. Catalyzes the dehydration of short chain beta-hydroxyacyl-ACPs and long chain saturated and unsaturated beta-hydroxyacyl-ACPs. The protein is 3-hydroxyacyl-[acyl-carrier-protein] dehydratase FabZ of Synechococcus sp. (strain JA-2-3B'a(2-13)) (Cyanobacteria bacterium Yellowstone B-Prime).